The sequence spans 253 residues: MSKSDVFHLGLTKNDLQGATLAIVPGDPDRVEKIAALMDKPVKLASHREFTTWRAELDGKPVIVCSTGIGGPSTSIAVEELAQLGIRTFLRIGTTGAIQPHINVGDVLVTTASVRLDGASLHFAPLEFPAVADFECTTALVEAAKSIGATTHVGVTASSDTFYPGQERYDTYSGRVVRHFKGSMEEWQAMGVMNYEMESATLLTMCASQGLRAGMVAGVIVNRTQQEIPNAETMKQTESHAVKIVVEAARRLL.

The protein belongs to the PNP/UDP phosphorylase family. As to quaternary structure, homohexamer.

Its subcellular location is the cytoplasm. The enzyme catalyses uridine + phosphate = alpha-D-ribose 1-phosphate + uracil. Its pathway is pyrimidine metabolism; UMP biosynthesis via salvage pathway; uracil from uridine (phosphorylase route): step 1/1. Functionally, catalyzes the reversible phosphorylytic cleavage of uridine to uracil and ribose-1-phosphate. Shows weak activity towards deoxyuridine and thymidine. The produced molecules are then utilized as carbon and energy sources or in the rescue of pyrimidine bases for nucleotide synthesis. This is Uridine phosphorylase from Escherichia coli (strain K12).